Reading from the N-terminus, the 855-residue chain is Inactive rhomboid protein 1 (855 aa).

Residues 1–36 (MSEARRDSTSSLQRKKPPWLKLDIPSAAPPAAEEPS) form a disordered region. Over 1–411 (MSEARRDSTS…HRPFFTYWLT (411 aa)) the chain is Cytoplasmic. Positions 25-36 (PSAAPPAAEEPS) are enriched in low complexity. Phosphoserine is present on residues serine 76 and serine 176. Phosphothreonine is present on residues threonine 180 and threonine 183. Serine 390 bears the Phosphoserine mark. Residues 412 to 432 (FVHSLVTVLAVCIYGIAPVGF) form a helical membrane-spanning segment. Residues 433–655 (SQHETVDSVL…NPEVPDQFYR (223 aa)) are Lumenal-facing. A glycan (N-linked (GlcNAc...) asparagine) is linked at asparagine 583. The helical transmembrane segment at 656-676 (LWLSLFLHAGILHCLVSICFQ) threads the bilayer. Residues 677-691 (MTVLRDLEKLAGWHR) are Cytoplasmic-facing. The helical transmembrane segment at 692 to 712 (IAIIYLLSGVTGNLASAIFLP) threads the bilayer. Over 713-714 (YR) the chain is Lumenal. A helical membrane pass occupies residues 715 to 735 (AEVGPAGSQFGILACLFVELF). Residues 736–746 (QSWQILARPWR) lie on the Cytoplasmic side of the membrane. Residues 747 to 767 (AFFKLLAVVLFLFTFGLLPWI) form a helical membrane-spanning segment. The Lumenal segment spans residues 768-772 (DNFAH). The helical transmembrane segment at 773–793 (ISGFISGLFLSFAFLPYISFG) threads the bilayer. At 794–803 (KFDLYRKRCQ) the chain is on the cytoplasmic side. A helical membrane pass occupies residues 804–824 (IIVFQVVFLGLLAGLVVLFYF). Topologically, residues 825–855 (YPVRCEWCEFLTCIPFTDKFCEKYELDAQLH) are lumenal.

The protein belongs to the peptidase S54 family. In terms of assembly, homodimer, or homooligomer. Interacts with TGFA and HBEGF. Interacts with EGF; may retain EGF in the endoplasmic reticulum and regulates its degradation through the endoplasmic reticulum-associated degradation (ERAD). Interacts (via cytoplasmic N-terminus) with FRMD8/iTAP; this interaction leads to mutual protein stabilization. Interacts with ADAM17/TACE.

It localises to the endoplasmic reticulum membrane. The protein localises to the golgi apparatus membrane. Its function is as follows. Regulates ADAM17 protease, a sheddase of the epidermal growth factor (EGF) receptor ligands and TNF, thereby plays a role in sleep, cell survival, proliferation, migration and inflammation. Does not exhibit any protease activity on its own. This chain is Inactive rhomboid protein 1 (RHBDF1), found in Plecturocebus moloch (Dusky titi monkey).